A 186-amino-acid polypeptide reads, in one-letter code: MTIDTTEVDALINAPGRCVVNSSLESLVELISHLSSCGFEQLTDIFGIDYLEREKRIEVVYLLLDLKRNRRCCVKVSVDPASEKVPTCCGVFSVANWFEREVYDMYGVVFEGHPDLRRILTDYEFEGFPMLKDFPLTGYKEVRYDLESKEVVYEKVDLSQDYRSFDSLTPWKGVGRPSDPFDGRKE.

A disordered region spans residues Asp166–Glu186.

It belongs to the complex I 30 kDa subunit family. NDH-1 is composed of 14 different subunits. Subunits NuoB, C, D, E, F, and G constitute the peripheral sector of the complex.

It localises to the cell inner membrane. The enzyme catalyses a quinone + NADH + 5 H(+)(in) = a quinol + NAD(+) + 4 H(+)(out). Its function is as follows. NDH-1 shuttles electrons from NADH, via FMN and iron-sulfur (Fe-S) centers, to quinones in the respiratory chain. The immediate electron acceptor for the enzyme in this species is believed to be ubiquinone. Couples the redox reaction to proton translocation (for every two electrons transferred, four hydrogen ions are translocated across the cytoplasmic membrane), and thus conserves the redox energy in a proton gradient. In Neorickettsia sennetsu (strain ATCC VR-367 / Miyayama) (Ehrlichia sennetsu), this protein is NADH-quinone oxidoreductase subunit C.